The primary structure comprises 79 residues: Sec-independent protein translocase protein TatA (79 aa).

A helical transmembrane segment spans residues 1–21 (MGGISIWQLLIIALIVVLLFG). Residues 43 to 79 (MSSEEDKKALEDTEAAKTAQTTQQATEKKPESNKEQA) are disordered. Basic and acidic residues predominate over residues 46–57 (EEDKKALEDTEA). A compositionally biased stretch (low complexity) spans 58–67 (AKTAQTTQQA). Residues 68-79 (TEKKPESNKEQA) show a composition bias toward basic and acidic residues.

The protein belongs to the TatA/E family. As to quaternary structure, the Tat system comprises two distinct complexes: a TatABC complex, containing multiple copies of TatA, TatB and TatC subunits, and a separate TatA complex, containing only TatA subunits. Substrates initially bind to the TatABC complex, which probably triggers association of the separate TatA complex to form the active translocon.

It localises to the cell inner membrane. Its function is as follows. Part of the twin-arginine translocation (Tat) system that transports large folded proteins containing a characteristic twin-arginine motif in their signal peptide across membranes. TatA could form the protein-conducting channel of the Tat system. This Shewanella putrefaciens (strain CN-32 / ATCC BAA-453) protein is Sec-independent protein translocase protein TatA.